A 56-amino-acid chain; its full sequence is UPF0434 protein Ecaj_0131 (56 aa).

It belongs to the UPF0434 family.

The polypeptide is UPF0434 protein Ecaj_0131 (Ehrlichia canis (strain Jake)).